The sequence spans 269 residues: Putative phosphoenolpyruvate synthase regulatory protein (269 aa).

149 to 156 (GVSRSGKT) serves as a coordination point for ADP.

It belongs to the pyruvate, phosphate/water dikinase regulatory protein family. PSRP subfamily.

The catalysed reaction is [pyruvate, water dikinase] + ADP = [pyruvate, water dikinase]-phosphate + AMP + H(+). It carries out the reaction [pyruvate, water dikinase]-phosphate + phosphate + H(+) = [pyruvate, water dikinase] + diphosphate. Its function is as follows. Bifunctional serine/threonine kinase and phosphorylase involved in the regulation of the phosphoenolpyruvate synthase (PEPS) by catalyzing its phosphorylation/dephosphorylation. This is Putative phosphoenolpyruvate synthase regulatory protein from Pseudoalteromonas translucida (strain TAC 125).